We begin with the raw amino-acid sequence, 1035 residues long: MKMMSVRCKLAQYLEDLEDVDLKKFKMHLEDYPPEKGCVPIPRGQMEKADHLDLATLMIDFNGEEKAWGMAVWIFAAINRRDLWEKAKKDQPEWNDACTSNLSMVCQEDSLEEEWIGLLGYLSRISICKKKKDYCKIYRRHVRSRFYSIKDRNARLGESVDLNRRYTQLQLVKEHPSKQEREHELLTIGRTKMWDRPMSSLKLELLFEPEDEHLEPVHTVVFQGAAGIGKTILARKIMLDWALGKLFKDKFDYLFFIHCREVSLRAPKSLADLIISCWPDPNPPVCKILCKPSRILFLMDGFDELQGAFDEHIEEVCTDWQKAVRGDILLSSLIRKKLLPKASLLITTRPVALEKLQHLLDHPRHVEILGFSEAKRKEYFFKYFSNELQAREAFRLIQENEILFTMCFIPLVCWIVCTGLKQQMETGKSLAQTSKTTTAVYVFFLSSLLQSRGGIEEHLFSAYLPGLCSLAADGIWNQKILFEECDLRKHGLQKTDVSAFLRMNVFQKEVDCERFYSFSHMTFQEFFAAMYYLLEEEEEGVTVRKGPEGCSDLLNRDVKVLLENYGKFEKGYLIFVVRFLFGLVNQERTSYLEKKLSCKISQQVRLELLKWIEVKAKAKKLQRQPSQLELFYCLYEMQEEDFVQSAMGHFPKIEINLSTRMDHVVSSFCIKNCHRVKTLSLGFLHNSPKEEEEEKRGSQPLDQVQCVFPDPHVACSSRLVNCCLTSSFCRGLFSSLSTNQSLTELDLSDNTLGDPGMRVLCEALQHPGCNIQRLWLGRCGLTHQCCFNISSVLSSSQKLVELDLSDNALGDFGVRLLCVGLKHLLCNLQKLWLVSCCLTSACCQDLALVLSSNHSLTRLYIGENALGDSGVQVLCEKMKDPQCNLQKLGLVNSGLTSLCCSALTSVLKTNQNLTHLYLRSNALGDMGLKLLCEGLLHPDCKLQMLELDNCSLTSHSCWDLSTILTHNQSLRKLNLSNNDLGDLCVVTLCEVLKQQGCLLQSLQLGEMYLNCETKRTLEALQEEKPELTVVFEISW.

In terms of domain architecture, Pyrin spans 1 to 93; the sequence is MKMMSVRCKL…WEKAKKDQPE (93 aa). Ser5 bears the Phosphoserine mark. A disulfide bond links Cys8 and Cys106. Phosphotyrosine is present on Tyr13. A lipid anchor (S-palmitoyl cysteine) is attached at Cys128. The required for binding to phosphatidylinositol 4-phosphate (PtdIns4P) stretch occupies residues 129–132; that stretch reads KKKK. Residues Tyr134 and Tyr138 each carry the phosphotyrosine modification. The region spanning 138–208 is the FISNA domain; sequence YRRHVRSRFY…SSLKLELLFE (71 aa). Residue Ser159 is modified to Phosphoserine. Tyr166 is modified (phosphotyrosine). Residue Thr167 participates in ATP binding. A Phosphoserine modification is found at Ser199. Residues 218–534 enclose the NACHT domain; that stretch reads HTVVFQGAAG…EFFAAMYYLL (317 aa). Position 224 to 231 (224 to 231) interacts with ATP; sequence GAAGIGKT. Phosphoserine is present on residues Ser263 and Ser293. A Glycyl lysine isopeptide (Lys-Gly) (interchain with G-Cter in ubiquitin) cross-link involves residue Lys322. Residue Ser332 is modified to Phosphoserine. Residues 353-357 carry the KFERQ-like motif 1 motif; sequence LEKLQ. Residue Lys428 forms a Glycyl lysine isopeptide (Lys-Gly) (interchain with G-Cter in ubiquitin) linkage. ATP is bound at residue His520. Positions 603-607 match the KFERQ-like motif 2 motif; that stretch reads QVRLE. Lys689 is covalently cross-linked (Glycyl lysine isopeptide (Lys-Gly) (interchain with G-Cter in ubiquitin)). Phosphoserine is present on residues Ser727 and Ser734. 5 LRR repeats span residues 741 to 761, 770 to 791, 798 to 818, 827 to 848, and 855 to 875; these read SLTELDLSDNTLGDPGMRVLC, NIQRLWLGRCGLTHQCCFNISS, KLVELDLSDNALGDFGVRLLC, NLQKLWLVSCCLTSACCQDLAL, and SLTRLYIGENALGDSGVQVLC. Residues 797-801 carry the KFERQ-like motif 3 motif; the sequence is QKLVE. A Phosphoserine modification is found at Ser805. S-palmitoyl cysteine attachment occurs at residues Cys836, Cys837, and Cys843. Tyr860 carries the post-translational modification Phosphotyrosine. Lys877 participates in a covalent cross-link: Glycyl lysine isopeptide (Lys-Gly) (interchain with G-Cter in ubiquitin). LRR repeat units follow at residues 884-905, 912-932, 941-962, and 969-990; these read NLQKLGLVNSGLTSLCCSALTS, NLTHLYLRSNALGDMGLKLLC, KLQMLELDNCSLTSHSCWDLST, and SLRKLNLSNNDLGDLCVVTLCE. Cys957 carries S-palmitoyl cysteine lipidation. Lys972 is covalently cross-linked (Glycyl lysine isopeptide (Lys-Gly) (interchain with G-Cter in ubiquitin)). Residues 990-994 carry the KFERQ-like motif 4 motif; that stretch reads EVLKQ. A Phosphoserine modification is found at Ser1034.

It belongs to the NLRP family. Sensor component of NLRP3 inflammasomes; inflammasomes are supramolecular complexes that assemble in the cytosol in response to pathogens and other damage-associated signals and play critical roles in innate immunity and inflammation. The core of NLRP3 inflammasomes consists of a signal sensor component (NLRP3), an adapter (PYCARD/ASC), which recruits an effector pro-inflammatory caspase (CASP1 and, possibly, CASP4 and CASP5). Homodecamer; inactive NLRP3 forms homodecameric double-ring cages that hide pyrin domains within NACHT-LRR rings to avoid premature activation. Interacts (via pyrin domain) with PYCARD/ASC (via pyrin domain); interaction is direct. Interacts (via LRR repeat domain) with NEK7 (via N-terminus); the interaction is required for the formation of the complex NLRP3:PYCARD, oligomerization of PYCARD/ASC and activation of CASP1. Interacts (via LRR repeat domain) with NR4A1/Nur77 (via N-terminus); the interaction is direct, requires activation of NR4A1 by its ligands NBRE-containing dsDNA and lipopolysaccharide, and stimulates the association of NLRP3 with NEK7 for non-canonical NLRP3 inflammasome activation. Interacts with CARD8; leading to inhibit formation of the NLRP3 inflammasome. Interacts with MEFV; this interaction targets NLRP3 to degradation by autophagy, hence preventing excessive IL1B- and IL18-mediated inflammation. Interacts with EIF2AK2/PKR; this interaction requires EIF2AK2 activity, is accompanied by EIF2AK2 autophosphorylation and promotes inflammasome assembly in response to specific stimuli. Interacts with GBP5 (via DAPIN domain); this interaction promotes inflammasome assembly in response to microbial and soluble, but not crystalline, agents. Interacts with PML (isoform PML-1) (via the leucine-rich repeat (LRR) domain); PML-mediated increase in NLRP3 inflammasome activation does not depend upon this interaction. Interacts (via NACHT domain) with DHX33 (via DEAH box); NLRP3 activation in presence of cytosolic dsRNA is mediated by DHX33. Interacts (via NACHT and LRR domains) with ARRB2; this interaction is direct and inducible by polyunsaturated fatty acids (PUFAs). Interacts (via NACHT domain) with DDX3X under both LPS-primed and inflammasome-activating conditions. Interacts with IRF4 (via the LRR domain); this interaction is direct and is required for optimal IRF4 binding to IL4 promoter and efficient IL4 transactivation during differentiation of Th2 helper T-cells. Interacts with MAVS; promoting localization to mitochondria and activation of the NLRP3 inflammasome. Interacts with MARK4; promoting localization of NLRP3 to the microtubule organizing center (MTOC). Interacts with TRIM50; this interaction also promotes NLRP3 oligomerization and subsequent inflammasome activation. Interacts with IRGM; preventing NLRP3 inflammasome assembly and promoting NLRP3 degradation. Interacts (via NACHT and LLR domains) with ABHD8; this interaction is enhanced in the presence of NLRP3 inflammasome inducers, such as ATP, nigericin, silica, or alum. Interaction with ABHD8 leads the recruitment of ZDHHC12, hence facilitating NLRP3 palmitoylation and degradation by the chaperone-mediated autophagy pathway (CMA), therefore attenuating NLRP3 inflammasome activation. Post-translationally, phosphorylation by MAPK8/JNK1 increases inflammasome activation by promoting deubiquitination by BRCC3 and NLRP3 homooligomerization. Phosphorylation at Ser-805 by CSNK1A1 prevents inflammasome activation by preventing NEK7 recruitment. Phosphorylation at Ser-5 in the pyrin domain inhibits homomultimerization of NLRP3 and activation of the NLRP3 inflammasome: dephosphorylation by protein phosphatase 2A (PP2A) promotes assembly of the NLRP3 inflammasome. Phosphorylation at Ser-293 by PKD/PRKD1 promotes NLRP3 inflammasome assembly. Phosphorylation by ERK1/MAPK3 promotes NLRP3 inflammasome assembly. Phosphorylation by BTK (at Tyr-134, Tyr-138 and Tyr-166) in the region that mediates binding to phosphatidylinositol phosphate, promotes relocalization of NLRP3 and assembly of the NLRP3 inflammasome. Phosphorylation at Tyr-860 inhibits NLRP3 inflammasome assembly: dephosphorylation by PTPN22 promotes inflammasome activation. Phosphorylated by LATS1 and LATS2 at Ser-263 following palmitoylation by ZDHHC1, promoting its relocalization to the microtubule organizing center (MTOC), where NLRP3 is activated by NEK7, leading to inflammasome assembly and activation. Ubiquitinated; undergoes both 'Lys-48'- and 'Lys-63'-linked polyubiquitination. Ubiquitination does not lead to degradation, but inhibits inflammasome activation. Deubiquitination is catalyzed by BRCC3 and associated with NLRP3 activation and inflammasome assembly. This process can be induced by the activation of Toll-like receptors (by LPS), through a non-transcriptional pathway dependent on the mitochondrial production of reactive oxygen species, and by ATP. Ubiquitinated by TRIM31 via 'Lys-48'-linked ubiquitination, leading to its degradation by the proteasome. Ubiquitinated at Lys-689 by the SCF(FBXL2) complex, leading to its degradation by the proteasome. Ubiquitinated by TRIM35 via 'lys-48' and 'Lys-63'-linked ubiquitination leading to inhibition of NLRP3 inflammasome activation. Undergoes 'Lys-27'-linked polyubiquitination by MARCHF5, leading to NLRP3-NEK7 complex formation and NLRP3 oligomerization. In terms of processing, the disulfide bond in the pyrin domain might play a role in reactive oxygen species-mediated activation. Post-translationally, palmitoylation by ZDHHC12 promotes NLRP3 degradation by the chaperone-mediated autophagy pathway (CMA) and therefore limits NLRP3 inflammasome activation. Interaction with ZDHHC12, and hence NLRP3 palmitoylation, is greatly enhanced by ABHD8. Following palmitoylation, HSPA8/HSC70 recognizes and binds the KFERQ-like motifs on NLRP3 and promotes NLRP3 recruitment to lysosomes, where it is degraded via the chaperone-mediated autophagy pathway in a LAMP2-dependent process. Palmitoylation at Cys-836 and Cys-837 by ZDHHC5 enhances its binding to NEK7 leading to inflammasome assembly and activation. Palmitoylation at Cys-128 and Cys-957 by ZDHHC1 facilitates phosphorylation at Ser-263 by LATS1 and LATS2, promoting its relocalization to the microtubule organizing center (MTOC), where NLRP3 is activated by NEK7, leading to inflammasome assembly and activation. Depalmitoylated by ABHD17A. Degraded via selective autophagy following interaction with IRGM. IRGM promotes NLRP3 recruitment to autophagosome membranes, promoting its SQSTM1/p62-dependent autophagy-dependent degradation.

The protein resides in the cytoplasm. The protein localises to the cytosol. It localises to the inflammasome. Its subcellular location is the cytoskeleton. It is found in the microtubule organizing center. The protein resides in the golgi apparatus membrane. The protein localises to the endoplasmic reticulum. It localises to the mitochondrion. Its subcellular location is the secreted. It is found in the nucleus. It carries out the reaction ATP + H2O = ADP + phosphate + H(+). Its activity is regulated as follows. Under resting conditions, NLRP3 binds ADP and is autoinhibited. Inactive NLRP3 forms homodecameric double-ring cages that hide pyrin domains within NACHT-LRR rings to avoid premature activation. NLRP3 activation stimuli include extracellular ATP, nigericin, reactive oxygen species, crystals of monosodium urate or cholesterol, amyloid-beta fibers, environmental or industrial particles and nanoparticles, such as asbestos, silica, aluminum salts, cytosolic dsRNA, etc. Almost all stimuli trigger intracellular K(+) efflux. These stimuli lead to membrane perturbations that induce activation of NLRP3. Upon activation, NLRP3 is transported to microtubule organizing center (MTOC), where it is unlocked by NEK7, leading to its relocalization to dispersed trans-Golgi network (dTGN) vesicle membranes and recruitment of PYCARD/ASC for the formation of an active inflammasome complex. NEK7-activated NLRP3 forms a disk-shaped inflammasome. NLRP3 and PYCARD/ASC interact via their respective pyrin domains; interaction initiates speck formation (nucleation) which greatly enhances further addition of soluble PYCARD/ASC molecules to the speck in a prion-like polymerization process. Clustered PYCARD/ASC nucleates the formation of CASP1 filaments through the interaction of their respective CARD domains, acting as a platform for CASP1 polymerization and activation. Active CASP1 then processes IL1B and IL18 precursors, leading to the release of mature cytokines in the extracellular milieu and inflammatory response. NLRP3 inflammasome assembly is inhibited by IRGM, which impedes NLRP3 oligomerization. NLRP3 inflammasome is inhibited by cyclic AMP (cAMP), which directly binds NLRP3; inhibition is relieved by calcium-sensing receptor CASR, which inhibits production of cAMP. Specifically inhibited by sulfonylurea MCC950 (also named CP-456,773, CRID3), a potent and specific small-molecule inhibitor of the NLRP3 inflammasome that acts by preventing ATP hydrolysis. Functionally, sensor component of the NLRP3 inflammasome, which mediates inflammasome activation in response to defects in membrane integrity, leading to secretion of inflammatory cytokines IL1B and IL18 and pyroptosis. In response to pathogens and other damage-associated signals that affect the integrity of membranes, initiates the formation of the inflammasome polymeric complex composed of NLRP3, CASP1 and PYCARD/ASC. Recruitment of pro-caspase-1 (proCASP1) to the NLRP3 inflammasome promotes caspase-1 (CASP1) activation, which subsequently cleaves and activates inflammatory cytokines IL1B and IL18 and gasdermin-D (GSDMD), promoting cytokine secretion and pyroptosis. Activation of NLRP3 inflammasome is also required for HMGB1 secretion; stimulating inflammatory responses. Under resting conditions, ADP-bound NLRP3 is autoinhibited. NLRP3 activation stimuli include extracellular ATP, nigericin, reactive oxygen species, crystals of monosodium urate or cholesterol, amyloid-beta fibers, environmental or industrial particles and nanoparticles, such as asbestos, silica, aluminum salts, cytosolic dsRNA, etc. Almost all stimuli trigger intracellular K(+) efflux. These stimuli lead to membrane perturbation and activation of NLRP3. Upon activation, NLRP3 is transported to microtubule organizing center (MTOC), where it is unlocked by NEK7, leading to its relocalization to dispersed trans-Golgi network (dTGN) vesicle membranes and formation of an active inflammasome complex. Associates with dTGN vesicle membranes by binding to phosphatidylinositol 4-phosphate (PtdIns4P). Shows ATPase activity. Independently of inflammasome activation, regulates the differentiation of T helper 2 (Th2) cells and has a role in Th2 cell-dependent asthma and tumor growth. During Th2 differentiation, required for optimal IRF4 binding to IL4 promoter and for IRF4-dependent IL4 transcription. Binds to the consensus DNA sequence 5'-GRRGGNRGAG-3'. May also participate in the transcription of IL5, IL13, GATA3, CCR3, CCR4 and MAF. The sequence is that of NACHT, LRR and PYD domains-containing protein 3 from Rattus norvegicus (Rat).